Here is a 183-residue protein sequence, read N- to C-terminus: ATP synthase subunit b, chloroplastic (183 aa).

Residues 28 to 48 form a helical membrane-spanning segment; that stretch reads DIFEANVINILLLLFGLIYVL.

Belongs to the ATPase B chain family. As to quaternary structure, F-type ATPases have 2 components, F(1) - the catalytic core - and F(0) - the membrane proton channel. F(1) has five subunits: alpha(3), beta(3), gamma(1), delta(1), epsilon(1). F(0) has four main subunits: a(1), b(1), b'(1) and c(10-14). The alpha and beta chains form an alternating ring which encloses part of the gamma chain. F(1) is attached to F(0) by a central stalk formed by the gamma and epsilon chains, while a peripheral stalk is formed by the delta, b and b' chains.

It localises to the plastid. The protein resides in the chloroplast thylakoid membrane. F(1)F(0) ATP synthase produces ATP from ADP in the presence of a proton or sodium gradient. F-type ATPases consist of two structural domains, F(1) containing the extramembraneous catalytic core and F(0) containing the membrane proton channel, linked together by a central stalk and a peripheral stalk. During catalysis, ATP synthesis in the catalytic domain of F(1) is coupled via a rotary mechanism of the central stalk subunits to proton translocation. Its function is as follows. Component of the F(0) channel, it forms part of the peripheral stalk, linking F(1) to F(0). This is ATP synthase subunit b, chloroplastic from Pyropia yezoensis (Susabi-nori).